The sequence spans 157 residues: Transcription elongation factor GreA (157 aa).

Positions 14–37 form a coiled coil; sequence LRKELERLLKRRPLITEAIAEARE.

It belongs to the GreA/GreB family.

Functionally, necessary for efficient RNA polymerase transcription elongation past template-encoded arresting sites. The arresting sites in DNA have the property of trapping a certain fraction of elongating RNA polymerases that pass through, resulting in locked ternary complexes. Cleavage of the nascent transcript by cleavage factors such as GreA or GreB allows the resumption of elongation from the new 3'terminus. GreA releases sequences of 2 to 3 nucleotides. The polypeptide is Transcription elongation factor GreA (Vibrio vulnificus (strain CMCP6)).